The chain runs to 338 residues: Ribonucleoside-diphosphate reductase small subunit (338 aa).

D81, E112, and H115 together coordinate Fe cation. Y119 is an active-site residue. Residues E174, E208, and H211 each coordinate Fe cation.

Belongs to the ribonucleoside diphosphate reductase small chain family. In terms of assembly, heterodimer of a large and a small subunit. Fe cation serves as cofactor.

The protein resides in the cytoplasm. It carries out the reaction a 2'-deoxyribonucleoside 5'-diphosphate + [thioredoxin]-disulfide + H2O = a ribonucleoside 5'-diphosphate + [thioredoxin]-dithiol. Its function is as follows. Provides the precursors necessary for DNA synthesis. Catalyzes the biosynthesis of deoxyribonucleotides from the corresponding ribonucleotides. The polypeptide is Ribonucleoside-diphosphate reductase small subunit (rnrB-1) (Dictyostelium discoideum (Social amoeba)).